The following is a 352-amino-acid chain: Holliday junction branch migration complex subunit RuvB (352 aa).

A large ATPase domain (RuvB-L) region spans residues 13–201; sequence FSFRKKELRL…FGISQKIEFY (189 aa). Residues arginine 41, glycine 82, lysine 85, threonine 86, threonine 87, 148–150, arginine 191, tyrosine 201, and arginine 238 each bind ATP; that span reads EDF. Mg(2+) is bound at residue threonine 86. The interval 202–273 is small ATPAse domain (RuvB-S); sequence TCDELKQIIV…LIKKALNSYQ (72 aa). The segment at 276–352 is head domain (RuvB-H); it reads EKGLDSLDRH…KYIDSKDDNF (77 aa). Arginine 330 and arginine 335 together coordinate DNA.

Belongs to the RuvB family. As to quaternary structure, homohexamer. Forms an RuvA(8)-RuvB(12)-Holliday junction (HJ) complex. HJ DNA is sandwiched between 2 RuvA tetramers; dsDNA enters through RuvA and exits via RuvB. An RuvB hexamer assembles on each DNA strand where it exits the tetramer. Each RuvB hexamer is contacted by two RuvA subunits (via domain III) on 2 adjacent RuvB subunits; this complex drives branch migration. In the full resolvosome a probable DNA-RuvA(4)-RuvB(12)-RuvC(2) complex forms which resolves the HJ.

The protein resides in the cytoplasm. It catalyses the reaction ATP + H2O = ADP + phosphate + H(+). Functionally, the RuvA-RuvB-RuvC complex processes Holliday junction (HJ) DNA during genetic recombination and DNA repair, while the RuvA-RuvB complex plays an important role in the rescue of blocked DNA replication forks via replication fork reversal (RFR). RuvA specifically binds to HJ cruciform DNA, conferring on it an open structure. The RuvB hexamer acts as an ATP-dependent pump, pulling dsDNA into and through the RuvAB complex. RuvB forms 2 homohexamers on either side of HJ DNA bound by 1 or 2 RuvA tetramers; 4 subunits per hexamer contact DNA at a time. Coordinated motions by a converter formed by DNA-disengaged RuvB subunits stimulates ATP hydrolysis and nucleotide exchange. Immobilization of the converter enables RuvB to convert the ATP-contained energy into a lever motion, pulling 2 nucleotides of DNA out of the RuvA tetramer per ATP hydrolyzed, thus driving DNA branch migration. The RuvB motors rotate together with the DNA substrate, which together with the progressing nucleotide cycle form the mechanistic basis for DNA recombination by continuous HJ branch migration. Branch migration allows RuvC to scan DNA until it finds its consensus sequence, where it cleaves and resolves cruciform DNA. The protein is Holliday junction branch migration complex subunit RuvB of Prochlorococcus marinus (strain AS9601).